The chain runs to 559 residues: Glucose-6-phosphate isomerase (559 aa).

The Proton donor role is filled by Glu352. Residues His383 and Lys511 contribute to the active site.

The protein belongs to the GPI family.

It is found in the cytoplasm. It catalyses the reaction alpha-D-glucose 6-phosphate = beta-D-fructose 6-phosphate. It functions in the pathway carbohydrate biosynthesis; gluconeogenesis. The protein operates within carbohydrate degradation; glycolysis; D-glyceraldehyde 3-phosphate and glycerone phosphate from D-glucose: step 2/4. In terms of biological role, catalyzes the reversible isomerization of glucose-6-phosphate to fructose-6-phosphate. In Chlorobium phaeobacteroides (strain DSM 266 / SMG 266 / 2430), this protein is Glucose-6-phosphate isomerase.